A 257-amino-acid polypeptide reads, in one-letter code: Acetylglutamate kinase (257 aa).

Residues 43–44 (GG), arginine 65, and asparagine 157 each bind substrate. ATP-binding positions include 180 to 185 (DVSGIL) and 208 to 210 (IIT).

It belongs to the acetylglutamate kinase family. ArgB subfamily. Homodimer.

It is found in the cytoplasm. The enzyme catalyses N-acetyl-L-glutamate + ATP = N-acetyl-L-glutamyl 5-phosphate + ADP. Its pathway is amino-acid biosynthesis; L-arginine biosynthesis; N(2)-acetyl-L-ornithine from L-glutamate: step 2/4. Functionally, catalyzes the ATP-dependent phosphorylation of N-acetyl-L-glutamate. The polypeptide is Acetylglutamate kinase (Proteus mirabilis (strain HI4320)).